A 1066-amino-acid chain; its full sequence is MAATVAGSGAAEVPSSLLLVVGGECGCRGLLAYVLEELERGIRSWDIDPGVCSLDEQLKVFVSRHSATFSSIVKGQRSLHHRGDTLETLVLLNPSDKSLCDELRNLLLDTASHKLLVLAGPCLEETGELLLQTGGFSPRHFLQVLGDKEIRDLLASTPPPAAPPKLTITCPTFGDWARLAPEVPGLQGVLHLRLNPPVQLPASEGLREFLEYVAESLEPPSPFELLEPPASVGLLRLARPCCYIFPGGLGDAAFFAVNGFTVLVNGGSNPKSSFWKLVRHLDRVDAVLVTHAGADSLPGLNSLLRRKLAERDEAAAGGGSGDDRLRRLISPNLGVVFLNARAAASRLVRGEDEAELALSLLSQLGITPVPLNRGPLPAEPTVLFQKMGVGRLDMYVLHPPSAATTDHTLASVCALLVWHPAGPSEKVVRVLFPGCTPPARLLDGLVHLQHLGFLREPVVTPQDMAGPRRAESKESVASRDSLRREGRTTVPSRPTQERPGVARKDSPRTEAPRRAEKEARPSREVKKDPRPSAPRTQPREVRRAASAVVSGKNVGAQVAPKTRRAPNTPRPGVPPAENGPRSPPSFRSGEASPPTEACSSPAPQLVATPSQESSLDLGLSPAGEEGGSLEEKTLELLLAASTPEPCTPSPAGAQQGPTESSGPLSLSPLRGGEPGPDASPTVTTPSLPAEVGSPHSTEVDESLSVSFEQVLPPPAAAASEAGLSLPLCGPRVRRSASPHDVDLCLVSPCEFEHRKAVPMAPAPVSPGSSNDSSARSQERAGAPGGAEETPPTSVSESLPTLSDSDPLPAAPGTADSDEDTEGFGVPRRDPLPDPLKIPPPLPTPPSICMVDPEMLPPEQARLKGGGSRTRKPLTRPSSGTTPPKATPVTAAKIKGLASGDRASRPLSARSEPSDKGNRASLSRKPSVPKTTTRGPSGSAGSRSGGSAAPPGSPVYLDLAYLPSGGSARLVDEEFFRRVRALCYVISGQDQHKEEGMRAVLDALLAGKQQWDRQLQVTLIPTFDSVAMHEWYEETHTRHQALGITVLGSNSTVSMQDEAFPACKVEF.

The necessary for the microtubule-organizing center localization stretch occupies residues 1-804 (MAATVAGSGA…SESLPTLSDS (804 aa)). Serine 320 and serine 472 each carry phosphoserine. The tract at residues 462–707 (QDMAGPRRAE…EVDESLSVSF (246 aa)) is disordered. 2 stretches are compositionally biased toward basic and acidic residues: residues 466–487 (GPRR…REGR) and 500–530 (GVAR…KDPR). Serine 582 carries the post-translational modification Phosphoserine. Residues 597-614 (ACSSPAPQLVATPSQESS) are compositionally biased toward polar residues. A Phosphothreonine modification is found at threonine 647. Serine 649, serine 660, serine 665, serine 667, serine 737, and serine 765 each carry phosphoserine. Over residues 656-671 (GPTESSGPLSLSPLRG) the composition is skewed to low complexity. Residues 676–1066 (PDASPTVTTP…EAFPACKVEF (391 aa)) are necessary for interaction with RASSF1. The segment at 720 to 973 (EAGLSLPLCG…GGSARLVDEE (254 aa)) is necessary for association with microtubules. Residues 758–950 (PMAPAPVSPG…SRSGGSAAPP (193 aa)) form a disordered region. Composition is skewed to polar residues over residues 766 to 775 (PGSSNDSSAR) and 790 to 803 (PPTS…TLSD). A Phosphoserine modification is found at serine 816. Residues 832-845 (PDPLKIPPPLPTPP) show a composition bias toward pro residues. 2 stretches are compositionally biased toward low complexity: residues 880-894 (TTPP…AKIK) and 933-949 (RGPS…SAAP). Positions 967-1066 (ARLVDEEFFR…EAFPACKVEF (100 aa)) are necessary for association with actin. The necessary for the mitochondrial aggregation and genome destruction stretch occupies residues 974–998 (FFRRVRALCYVISGQDQHKEEGMRA).

This sequence belongs to the MAP1 family. In terms of assembly, heterodimer of a heavy and a light chain. Interacts with microtubules and actin. Both MAP1S heavy and light chains interact with microtubules. MAP1S light chain interacts with actin. Interacts (via C-terminus) with GAN (via Kelch domains). Interacts with ESR1, LRPPRC, RASSF1, microtubules and VCY2. Interacts with ESR1, LRPPRC, RASSF1, microtubules and VCY2. Interacts with WDR47 (via N-terminus of light chain).

The protein resides in the nucleus. Its subcellular location is the cytoplasm. It localises to the cytosol. The protein localises to the cytoskeleton. It is found in the spindle. Microtubule-associated protein that mediates aggregation of mitochondria resulting in cell death and genomic destruction (MAGD). Plays a role in anchoring the microtubule organizing center to the centrosomes. Binds to DNA. Plays a role in apoptosis. Involved in the formation of microtubule bundles. In Bos taurus (Bovine), this protein is Microtubule-associated protein 1S (MAP1S).